We begin with the raw amino-acid sequence, 34 residues long: GICACRRRFCLNFEQFSGYCRVNGARYVRCCSRR.

Cystine bridges form between Cys3/Cys31, Cys5/Cys20, and Cys10/Cys30.

Belongs to the alpha-defensin family. In terms of tissue distribution, lung, spleen, small intestine, pituitary gland, adrenal medulla and plasma.

Its subcellular location is the secreted. In terms of biological role, microbicidal activity and inhibits corticotropin (ACTH) stimulated corticosterone production. In Oryctolagus cuniculus (Rabbit), this protein is Corticostatin-6.